A 273-amino-acid chain; its full sequence is Undecaprenyl-diphosphatase (273 aa).

A run of 7 helical transmembrane segments spans residues 54–74, 90–110, 116–136, 156–178, 190–210, 222–242, and 252–272; these read LGSI…LIGI, LTLI…LVFH, LFNP…LIAA, QAFM…SGAT, YAAS…ATVL, ADIP…LIAI, and ISFI…YVVF.

Belongs to the UppP family.

It is found in the cell inner membrane. The enzyme catalyses di-trans,octa-cis-undecaprenyl diphosphate + H2O = di-trans,octa-cis-undecaprenyl phosphate + phosphate + H(+). In terms of biological role, catalyzes the dephosphorylation of undecaprenyl diphosphate (UPP). Confers resistance to bacitracin. The protein is Undecaprenyl-diphosphatase of Salmonella paratyphi A (strain ATCC 9150 / SARB42).